Reading from the N-terminus, the 152-residue chain is MSEKYVVTWDMLQIHARKLASRLLPADQWKGIIAVSRGGLVPAGILARELGIRYVDTVCIASYNHDNQGELKVLKRAEGDGEGFIVIDDLVDTGGTAKAIREMYPKAHFVTIFAKPAGRPLVDDYEVDIPQGTWIEQPWDMAVTFVAPLSAK.

Residues 37–38 (RG) and 88–96 (DDLVDTGGT) contribute to the 5-phospho-alpha-D-ribose 1-diphosphate site. D89 serves as a coordination point for Mg(2+). Residues D92 and I135 each coordinate guanine. D92 and I135 together coordinate xanthine. GMP-binding positions include 92–96 (DTGGT) and 134–135 (WI).

It belongs to the purine/pyrimidine phosphoribosyltransferase family. XGPT subfamily. Homotetramer. The cofactor is Mg(2+).

The protein localises to the cell inner membrane. It catalyses the reaction GMP + diphosphate = guanine + 5-phospho-alpha-D-ribose 1-diphosphate. It carries out the reaction XMP + diphosphate = xanthine + 5-phospho-alpha-D-ribose 1-diphosphate. The enzyme catalyses IMP + diphosphate = hypoxanthine + 5-phospho-alpha-D-ribose 1-diphosphate. Its pathway is purine metabolism; GMP biosynthesis via salvage pathway; GMP from guanine: step 1/1. It participates in purine metabolism; XMP biosynthesis via salvage pathway; XMP from xanthine: step 1/1. Its function is as follows. Purine salvage pathway enzyme that catalyzes the transfer of the ribosyl-5-phosphate group from 5-phospho-alpha-D-ribose 1-diphosphate (PRPP) to the N9 position of the 6-oxopurines guanine and xanthine to form the corresponding ribonucleotides GMP (guanosine 5'-monophosphate) and XMP (xanthosine 5'-monophosphate), with the release of PPi. To a lesser extent, also acts on hypoxanthine. This chain is Xanthine-guanine phosphoribosyltransferase, found in Yersinia enterocolitica serotype O:8 / biotype 1B (strain NCTC 13174 / 8081).